A 462-amino-acid chain; its full sequence is Integrator complex subunit 12 (462 aa).

A disordered region spans residues 42–132 (GIDSSYRPSQ…PETQSSPITV (91 aa)). The span at 59–86 (ISSTKNISIKQEPKISSSLPSGNNNGKV) shows a compositional bias: polar residues. K68 participates in a covalent cross-link: Glycyl lysine isopeptide (Lys-Gly) (interchain with G-Cter in SUMO2). Basic and acidic residues predominate over residues 88-124 (TTEKVKKEAEKRPADKMKSDITEGVDIPKKPRLEKPE). S128 carries the phosphoserine modification. The PHD-type zinc-finger motif lies at 159–215 (GLACVVCRQMMVASGNQLVECQECHNLYHRDCHKPQVTDKEANDPRLVWYCARCTRQ). K254 is covalently cross-linked (Glycyl lysine isopeptide (Lys-Gly) (interchain with G-Cter in SUMO2)). Positions 301–328 (SSAGPSTAKLSSTTQNNTGKPATSSANQ) are enriched in polar residues. The disordered stretch occupies residues 301-462 (SSAGPSTAKL…KKAAQKKLKK (162 aa)). 2 stretches are compositionally biased toward low complexity: residues 347-358 (KIGSNNSTTPTV) and 382-437 (VSKV…GPTS). Residues 449 to 462 (QMVKKKAAQKKLKK) show a composition bias toward basic residues.

Belongs to the Integrator subunit 12 family. Component of the Integrator complex, composed of core subunits INTS1, INTS2, INTS3, INTS4, INTS5, INTS6, INTS7, INTS8, INTS9/RC74, INTS10, INTS11/CPSF3L, INTS12, INTS13, INTS14 and INTS15. The core complex associates with protein phosphatase 2A subunits PPP2CA and PPP2R1A, to form the Integrator-PP2A (INTAC) complex. Dephosphorylated at Ser-128 by the PNUTS-PP1 complex, promoting RNA polymerase II transcription pause-release.

The protein localises to the nucleus. Its function is as follows. Component of the integrator complex, a multiprotein complex that terminates RNA polymerase II (Pol II) transcription in the promoter-proximal region of genes. The integrator complex provides a quality checkpoint during transcription elongation by driving premature transcription termination of transcripts that are unfavorably configured for transcriptional elongation: the complex terminates transcription by (1) catalyzing dephosphorylation of the C-terminal domain (CTD) of Pol II subunit POLR2A/RPB1 and SUPT5H/SPT5, (2) degrading the exiting nascent RNA transcript via endonuclease activity and (3) promoting the release of Pol II from bound DNA. The integrator complex is also involved in terminating the synthesis of non-coding Pol II transcripts, such as enhancer RNAs (eRNAs), small nuclear RNAs (snRNAs), telomerase RNAs and long non-coding RNAs (lncRNAs). Mediates recruitment of cytoplasmic dynein to the nuclear envelope, probably as component of the integrator complex. This is Integrator complex subunit 12 from Homo sapiens (Human).